Reading from the N-terminus, the 81-residue chain is Beta-toxin Ct13 (81 aa).

The first 18 residues, 1–18 (MKVLILIIASVLLIGVEC), serve as a signal peptide directing secretion. In terms of domain architecture, LCN-type CS-alpha/beta spans 19 to 78 (KDGFPVDSEGCILLPCATRAYCSVNCKFMKGSGGSCDTLACHCKGLPEDAKVQDKPTNKC). Disulfide bonds link Cys29/Cys78, Cys34/Cys54, Cys40/Cys59, and Cys44/Cys61. Cys78 bears the Cysteine amide mark.

It belongs to the long (4 C-C) scorpion toxin superfamily. Sodium channel inhibitor family. Beta subfamily. In terms of tissue distribution, expressed by the venom gland.

Its subcellular location is the secreted. Beta toxins bind voltage-independently at site-4 of sodium channels (Nav) and shift the voltage of activation toward more negative potentials thereby affecting sodium channel activation and promoting spontaneous and repetitive firing. The chain is Beta-toxin Ct13 from Centruroides tecomanus (Scorpion).